The primary structure comprises 582 residues: Pre-hexon-linking protein IIIa (582 aa).

The segment at 1–114 (MQRPAIIAER…ALLERVARYN (114 aa)) is peripentonal hexon-tethering domain. The segment at 146–259 (GSLVALNAFL…FTNTNSLSRD (114 aa)) is binding to hexon-linking protein. At serine 233 the chain carries Phosphoserine; by host. Threonine 282 is modified (phosphothreonine; by host). Positions 437–479 (GKKEAGDEGPLLDSRASSPFPSLTSLPASVNSGRTTRPRLTGE) are disordered. Over residues 451 to 471 (RASSPFPSLTSLPASVNSGRT) the composition is skewed to polar residues. 2 positions are modified to phosphoserine; by host: serine 458 and serine 465. Tyrosine 482 is modified (phosphotyrosine; by host). A Phosphoserine; by host modification is found at serine 503. Over residues 517–526 (ERREWEERQP) the composition is skewed to basic and acidic residues. Positions 517–582 (ERREWEERQP…RPQGCIGSLY (66 aa)) are disordered. Residues 530-543 (RPPRQRWQRRKKGA) are compositionally biased toward basic residues. The propeptide occupies 566–582 (GNPFAHLRPQGCIGSLY).

It belongs to the adenoviridae hexon-linking protein IIIa family. In terms of assembly, interacts with hexon proteins; this interaction tethers the peripentonal hexons to hexons situated in the facet. Interacts with the penton protein (via N-terminus). Interacts with packaging protein 3; this interaction is required to promote correct genome packaging. Post-translationally, cleaved near the C-terminus by the viral protease during virion maturation to form the mature protein.

The protein localises to the virion. The protein resides in the host nucleus. In terms of biological role, structural component of the virion that acts as a cement protein on the capsid exterior which mediates the interactions between the hexons, including the peripentonal hexons, and reaches all the way to the penton vertices. Two hexon linking proteins IIIa, one from each facet, stabilize the unique edge interface between a pair of facets. As the virus enters the host cell, hexon linking proteins IIIa are shed concomitant with virion acidification in the endosome. During virus assembly, seems to play a role in the serotype specificity of the packaging of viral DNA via its interaction with packaging protein 3. In Human adenovirus A serotype 12 (HAdV-12), this protein is Pre-hexon-linking protein IIIa.